We begin with the raw amino-acid sequence, 576 residues long: Epsin-1 (576 aa).

Residues arginine 8, lysine 11, arginine 25, asparagine 30, arginine 63, and histidine 73 each coordinate a 1,2-diacyl-sn-glycero-3-phospho-(1D-myo-inositol-4,5-bisphosphate). The region spanning 12-144 (NIVHNYSEAE…RDEDRLREER (133 aa)) is the ENTH domain. A disordered region spans residues 149-185 (KTKEKLAQTATASSAAVGSGPPPEAEQAWPQSSGEEE). Residues 157–167 (TATASSAAVGS) show a composition bias toward low complexity. UIM domains are found at residues 183-202 (EEEL…ADQP), 208-227 (EDDA…HDKE), and 233-252 (GDDL…TGGK). A compositionally biased stretch (low complexity) spans 265 to 296 (TAPAPAPTTDPWGGPAPMAAAVPTAAPTSDPW). The segment at 265-404 (TAPAPAPTTD…GGFDTEPDEF (140 aa)) is disordered. Tandem repeats lie at residues 274 to 276 (DPW), 294 to 296 (DPW), 306 to 308 (DPW), 319 to 321 (DPW), 332 to 334 (DPW), 349 to 351 (DPW), 367 to 369 (DPW), and 377 to 379 (DPW). An 8 X 3 AA repeats of [ED]-P-W region spans residues 274–379 (DPWGGPAPMA…TPAPAFSDPW (106 aa)). Over residues 297-314 (GGPPVPPAADPWGGPAPT) the composition is skewed to pro residues. The segment covering 332–368 (DPWGGTPAPAAGEGPTPDPWGSSDGGVPVSGPSASDP) has biased composition (low complexity). Serine 382 is subject to Phosphoserine; by CDK1. The short motif at 402-411 (DEFSDFDRLR) is the [DE]-X(1,2)-F-X-X-[FL]-X-X-X-R motif element. Residues serine 419, serine 420, serine 435, serine 447, and serine 454 each carry the phosphoserine modification. The segment at 448–576 (LAEAVGSPPP…PAPNTNPFLL (129 aa)) is disordered. The segment covering 454–468 (SPPPAATPTPTPPTR) has biased composition (pro residues). Phosphothreonine occurs at positions 460, 464, and 470. Serine 473 carries the post-translational modification Phosphoserine. Threonine 494 carries the post-translational modification Phosphothreonine. Repeat copies occupy residues 502-504 (NPF) and 518-520 (NPF). A 3 X 3 AA repeats of N-P-F region spans residues 502 to 574 (NPFLPGGGPA…GPPAPNTNPF (73 aa)). Arginine 534 is subject to Omega-N-methylarginine. The span at 557-570 (GLPPMMPPGPPAPN) shows a compositional bias: pro residues. Residues 572-574 (NPF) form repeat 3.

Belongs to the epsin family. Monomer. Binds clathrin, ZBTB16/ZNF145 and ITSN1. Binds ubiquitinated proteins. Binds AP2A1 and AP2A2. Interacts with RALBP1 in a complex also containing NUMB and TFAP2A during interphase and mitosis. Interacts with AP2B1. Interacts with UBQLN2. Interacts with REPS2; the interaction is direct. Interacts with EPS15; the interaction is direct. Interacts with ENTREP1. In terms of processing, phosphorylated on serine and/or threonine residues in mitotic cells. Phosphorylation reduces interaction with REPS2, AP-2 and the membrane fraction. Depolarization of synaptosomes results in dephosphorylation. Post-translationally, ubiquitinated.

It localises to the cytoplasm. Its subcellular location is the cell membrane. The protein resides in the nucleus. It is found in the membrane. The protein localises to the clathrin-coated pit. Its function is as follows. Binds to membranes enriched in phosphatidylinositol 4,5-bisphosphate (PtdIns(4,5)P2). Modifies membrane curvature and facilitates the formation of clathrin-coated invaginations. Regulates receptor-mediated endocytosis. This chain is Epsin-1 (EPN1), found in Homo sapiens (Human).